Here is a 288-residue protein sequence, read N- to C-terminus: Ion-translocating oxidoreductase complex subunit D (288 aa).

9 helical membrane-spanning segments follow: residues isoleucine 26 to glycine 46, asparagine 47 to asparagine 67, leucine 80 to glycine 100, glycine 101 to histidine 121, alanine 126 to leucine 146, glycine 159 to valine 179, valine 200 to isoleucine 220, isoleucine 235 to tyrosine 255, and valine 256 to lysine 276.

This sequence belongs to the NqrB/RnfD family. In terms of assembly, the Rnf complex is probably composed of eight subunits, including RnfA, RnfB, RnfC, RnfD, RnfE and RnfG. Requires FMN as cofactor.

It is found in the cell membrane. In terms of biological role, part of a membrane-bound complex that couples electron transfer with translocation of ions across the membrane. Catalyzes Na(+) transport, most probably coupled to electron transfer from reduced ferredoxin to methanophenazine and heterodisulfide reductase. Involved in heterodisulfide reduction during methanogenesis from acetate. This Methanosarcina acetivorans (strain ATCC 35395 / DSM 2834 / JCM 12185 / C2A) protein is Ion-translocating oxidoreductase complex subunit D.